The following is a 402-amino-acid chain: Deoxyguanosinetriphosphate triphosphohydrolase-like protein (402 aa).

Residues 69-217 (RLTHSLEVAQ…AAIADDIAYD (149 aa)) form the HD domain.

This sequence belongs to the dGTPase family. Type 2 subfamily.

This chain is Deoxyguanosinetriphosphate triphosphohydrolase-like protein, found in Bradyrhizobium diazoefficiens (strain JCM 10833 / BCRC 13528 / IAM 13628 / NBRC 14792 / USDA 110).